The sequence spans 125 residues: MKLLPELKYSKDHEWVKVIDGDVVYIGITDYAQDQLGEILFVETPEVEDTVTKGVDFGVVESSKVASDLISPVNGEVLEVNEKLEDEPECINEDPYENWILKVKLADVAELDTLLSDKEYEAGLE.

A Lipoyl-binding domain is found at 23–104 (VVYIGITDYA…PYENWILKVK (82 aa)). An N6-lipoyllysine modification is found at lysine 64.

This sequence belongs to the GcvH family. The glycine cleavage system is composed of four proteins: P, T, L and H. (R)-lipoate serves as cofactor.

Functionally, the glycine cleavage system catalyzes the degradation of glycine. The H protein shuttles the methylamine group of glycine from the P protein to the T protein. The protein is Glycine cleavage system H protein of Clostridioides difficile (strain 630) (Peptoclostridium difficile).